The primary structure comprises 217 residues: Oxygen-evolving enhancer protein 3-1, chloroplastic (217 aa).

The transit peptide at methionine 1–alanine 68 directs the protein to the chloroplast.

The protein belongs to the PsbQ family.

It is found in the plastid. It localises to the chloroplast thylakoid membrane. This chain is Oxygen-evolving enhancer protein 3-1, chloroplastic (PSBQ1), found in Zea mays (Maize).